We begin with the raw amino-acid sequence, 247 residues long: Eukaryotic translation initiation factor 6-1 (247 aa).

It belongs to the eIF-6 family. In terms of assembly, monomer. Associates with the 60S ribosomal subunit.

The protein localises to the cytoplasm. Its subcellular location is the nucleus. The protein resides in the nucleolus. Binds to the 60S ribosomal subunit and prevents its association with the 40S ribosomal subunit to form the 80S initiation complex in the cytoplasm. May also be involved in ribosome biogenesis. The chain is Eukaryotic translation initiation factor 6-1 from Arabidopsis thaliana (Mouse-ear cress).